Here is an 899-residue protein sequence, read N- to C-terminus: Solute carrier family 12 member 9 (899 aa).

Topologically, residues 1 to 44 are cytoplasmic; that stretch reads MTSESSPLLHYRLFSVSDGGLGPPDSSPIMTDAVTVGTGPTQRK. Residues 45-65 traverse the membrane as a helical segment; sequence LSTFFGVVVPTVLSMFSIVVF. Over 66 to 80 the chain is Extracellular; that stretch reads MRIGFVVGHAGLLQS. A helical membrane pass occupies residues 81–101; the sequence is LLMLFVAYVIIWLTVLSVCAI. The Cytoplasmic portion of the chain corresponds to 102–127; sequence STNGAVQGGGAYFMISRTLGPEFGGS. The chain crosses the membrane as a helical span at residues 128–148; the sequence is IGLMFYLANVFACGVYVLGLV. Topologically, residues 149–176 are extracellular; that stretch reads EAVLDVFGRDPSDVTDSLRSLPQGYGYS. Residues 177 to 197 form a helical membrane-spanning segment; that stretch reads FLYASIILLLCMAICLVGASI. Residues 198 to 202 lie on the Cytoplasmic side of the membrane; it reads YSQAS. The helical transmembrane segment at 203 to 223 threads the bilayer; sequence FFIFLLVFVVLLTILISFLAV. At 224 to 266 the chain is on the extracellular side; that stretch reads RPLTVSIRHGGNVTMTGVYTGINSSTLHNNLQADYSLDYTTGN. Residues Asn235 and Asn246 are each glycosylated (N-linked (GlcNAc...) asparagine). A helical membrane pass occupies residues 267-287; it reads LMNFATVFAVMFNGCTGIMAG. Residues 288–304 lie on the Cytoplasmic side of the membrane; the sequence is CNLSGELKQPSRSIPMG. A helical transmembrane segment spans residues 305-325; that stretch reads TIIAVIITFFVYLILFIFTAF. Topologically, residues 326-347 are extracellular; it reads TCDRTLLREDYGFFRSINIWPP. Residues 348-368 form a helical membrane-spanning segment; that stretch reads FVLIGVYATSLSASMSTLIGA. At 369 to 393 the chain is on the cytoplasmic side; it reads SRILHALAKDDLFGVLLAPAKLVSK. The helical transmembrane segment at 394 to 414 threads the bilayer; the sequence is GGNPWGAVVYTWALVQLVLLA. The Extracellular segment spans residues 415–419; it reads GKLNT. Residues 420-440 traverse the membrane as a helical segment; that stretch reads IAGIVTVFYLIAYAAIDLACL. Topologically, residues 441 to 469 are cytoplasmic; that stretch reads ALEWASAPNFRPTFRFFSWHTCLLGILSS. Residues 470–490 traverse the membrane as a helical segment; it reads LVMMFLINPAYASGSIVLLLL. Residues 491–739 are Extracellular-facing; it reads LLGSIHFRSS…PLDLLRPQAS (249 aa). The chain crosses the membrane as a helical span at residues 740 to 760; the sequence is AYVDVCSLFLLQMACILNMAA. At 761–899 the chain is on the cytoplasmic side; that stretch reads SWRRYQLRVF…GLTPVTCTEL (139 aa).

The protein belongs to the SLC12A transporter family.

The protein localises to the cell membrane. Its subcellular location is the lysosome membrane. Functionally, seems to correspond to a subunit of a multimeric transport system and thus, additional subunits may be required for its function. May play a role in lysosomal ion flux and osmoregulation. This is Solute carrier family 12 member 9 (slc12a9) from Xenopus laevis (African clawed frog).